The following is a 405-amino-acid chain: N-methyltransferase nanE (405 aa).

S-adenosyl-L-methionine is bound by residues 238–239 (GG), Asp-261, and 290–291 (HH).

The protein belongs to the class I-like SAM-binding methyltransferase superfamily. Cation-independent O-methyltransferase family.

It functions in the pathway secondary metabolite biosynthesis. Functionally, N-methyltransferase; part of the gene cluster that mediates the biosynthesis of the benzazepine alkaloid nanangelenin A which contains an unprecedented 3,4-dihydro-1-benzazepine-2,5-dione-N-prenyl-N-acetoxy-anthranilamide scaffold. The first step of nanangelenin biosynthesis is catalyzed by the indoleamine 2,3-dioxygenase nanC which produces N-formyl-kynurenine through the catabolism of tryptophan. The two-module NRPS nanA then utilizes anthranilate (Ant) and L-kynurenine (L-Kyn) to assemble the dipeptide product nanangelenin B. The first adenylation domain of nanA (A1) loads anthranilate onto the T1 domain, while A2 loads kynurenine, generated through spontaneous nonenzymatic deformylation of the nanC-supplied N-formyl-kynurenine. The peptide bond formation between the tethered amino acids is catalyzed by the first condensation domain (C1) between anthranilate's carbonyl carbon and kynurenine's aliphatic primary amine. The second C domain (C2) catalyzes the final cyclization event between the aromatic amine of kynurenine and the tethered carbonyl carbon, yielding nanangelenin B. The terminal T3 domain enhances the catalytic efficiency of C2, suggesting the T2-tethered Ant-L-Kyn is transferred to T3 prior to cyclization by C2. Once released from nanA, nanangelenin B is then prenylated by the prenyltransferase nanD to form nanangelenin C. Nanangelenin C is then N-hydroxylated by the FAD-dependent monooxygenase nanF and further acetylated by the acetyltransferase nanB to yield nanangelenin F. Finally, the N-methyltransferase nanE methylates the amide nitrogen of 1-benzazepine to convert nanangelenin F into nanangelenin A. NanE is also able to methylate most of the intermediates of the pathway such as nanangelenin B and nanangelenin C to produce nanangelenin D and nanangelenin E, respectively. The polypeptide is N-methyltransferase nanE (Aspergillus nanangensis).